The chain runs to 74 residues: Exodeoxyribonuclease 7 small subunit (74 aa).

This sequence belongs to the XseB family. Heterooligomer composed of large and small subunits.

Its subcellular location is the cytoplasm. The catalysed reaction is Exonucleolytic cleavage in either 5'- to 3'- or 3'- to 5'-direction to yield nucleoside 5'-phosphates.. Its function is as follows. Bidirectionally degrades single-stranded DNA into large acid-insoluble oligonucleotides, which are then degraded further into small acid-soluble oligonucleotides. The protein is Exodeoxyribonuclease 7 small subunit of Glaesserella parasuis serovar 5 (strain SH0165) (Haemophilus parasuis).